Consider the following 221-residue polypeptide: Ribosomal RNA small subunit methyltransferase G (221 aa).

S-adenosyl-L-methionine is bound by residues G83, F88, 132 to 133, and R146; that span reads LE.

It belongs to the methyltransferase superfamily. RNA methyltransferase RsmG family.

The protein localises to the cytoplasm. The catalysed reaction is guanosine(527) in 16S rRNA + S-adenosyl-L-methionine = N(7)-methylguanosine(527) in 16S rRNA + S-adenosyl-L-homocysteine. Specifically methylates the N7 position of guanine in position 527 of 16S rRNA. This chain is Ribosomal RNA small subunit methyltransferase G, found in Zymomonas mobilis subsp. mobilis (strain ATCC 31821 / ZM4 / CP4).